We begin with the raw amino-acid sequence, 149 residues long: Urease accessory protein UreE (149 aa).

This sequence belongs to the UreE family.

Its subcellular location is the cytoplasm. In terms of biological role, involved in urease metallocenter assembly. Binds nickel. Probably functions as a nickel donor during metallocenter assembly. The polypeptide is Urease accessory protein UreE (Ureaplasma parvum serovar 3 (strain ATCC 700970)).